The chain runs to 454 residues: Bleomycin hydrolase (454 aa).

N-acetylmethionine is present on Met1. Residues Cys73 and His372 contribute to the active site. Lys391 is modified (N6-acetyllysine). The active site involves Asn396.

The protein belongs to the peptidase C1 family. In terms of assembly, homohexamer. Interacts with NUDT12 (via ANK repeats). Expressed at relatively higher levels in the stomach, esophagus, spleen, thymus and testis, and at lower levels in the skin, lung and skeletal muscle.

Its subcellular location is the cytoplasm. It localises to the cytoplasmic granule. It carries out the reaction Inactivates bleomycin B2 (a cytotoxic glycometallopeptide) by hydrolysis of a carboxyamide bond of beta-aminoalanine, but also shows general aminopeptidase activity. The specificity varies somewhat with source, but amino acid arylamides of Met, Leu and Ala are preferred.. Its function is as follows. The normal physiological role of BLM hydrolase is unknown, but it catalyzes the inactivation of the antitumor drug BLM (a glycopeptide) by hydrolyzing the carboxamide bond of its B-aminoalaninamide moiety thus protecting normal and malignant cells from BLM toxicity. Binds single-stranded DNA with higher affinity than double-stranded DNA. May play an important role in the metabolism of antibiotics. This Rattus norvegicus (Rat) protein is Bleomycin hydrolase (Blmh).